We begin with the raw amino-acid sequence, 323 residues long: Acetyl-coenzyme A carboxylase carboxyl transferase subunit alpha (323 aa).

Residues 39–293 form the CoA carboxyltransferase C-terminal domain; that stretch reads RLSKKSQQLT…RRALADSLRQ (255 aa).

It belongs to the AccA family. Acetyl-CoA carboxylase is a heterohexamer composed of biotin carboxyl carrier protein (AccB), biotin carboxylase (AccC) and two subunits each of ACCase subunit alpha (AccA) and ACCase subunit beta (AccD).

The protein localises to the cytoplasm. The enzyme catalyses N(6)-carboxybiotinyl-L-lysyl-[protein] + acetyl-CoA = N(6)-biotinyl-L-lysyl-[protein] + malonyl-CoA. The protein operates within lipid metabolism; malonyl-CoA biosynthesis; malonyl-CoA from acetyl-CoA: step 1/1. Functionally, component of the acetyl coenzyme A carboxylase (ACC) complex. First, biotin carboxylase catalyzes the carboxylation of biotin on its carrier protein (BCCP) and then the CO(2) group is transferred by the carboxyltransferase to acetyl-CoA to form malonyl-CoA. This chain is Acetyl-coenzyme A carboxylase carboxyl transferase subunit alpha, found in Burkholderia lata (strain ATCC 17760 / DSM 23089 / LMG 22485 / NCIMB 9086 / R18194 / 383).